A 264-amino-acid chain; its full sequence is Phosphonoacetaldehyde hydrolase (264 aa).

Catalysis depends on aspartate 9, which acts as the Nucleophile. Mg(2+) is bound by residues aspartate 9 and alanine 11. Residue lysine 50 is the Schiff-base intermediate with substrate of the active site. Residue aspartate 183 participates in Mg(2+) binding.

Belongs to the HAD-like hydrolase superfamily. PhnX family. As to quaternary structure, homodimer. The cofactor is Mg(2+).

It catalyses the reaction phosphonoacetaldehyde + H2O = acetaldehyde + phosphate + H(+). Involved in phosphonate degradation. The polypeptide is Phosphonoacetaldehyde hydrolase (Bacillus cytotoxicus (strain DSM 22905 / CIP 110041 / 391-98 / NVH 391-98)).